A 481-amino-acid chain; its full sequence is Ribosomal RNA small subunit methyltransferase F (481 aa).

S-adenosyl-L-methionine-binding positions include 119-125 (ASAPGSK), E143, D170, and D188. C241 acts as the Nucleophile in catalysis.

It belongs to the class I-like SAM-binding methyltransferase superfamily. RsmB/NOP family.

It localises to the cytoplasm. The catalysed reaction is cytidine(1407) in 16S rRNA + S-adenosyl-L-methionine = 5-methylcytidine(1407) in 16S rRNA + S-adenosyl-L-homocysteine + H(+). Its function is as follows. Specifically methylates the cytosine at position 1407 (m5C1407) of 16S rRNA. The chain is Ribosomal RNA small subunit methyltransferase F from Shewanella sp. (strain MR-4).